Consider the following 308-residue polypeptide: Secreted frizzled-related protein 1 (308 aa).

An N-terminal signal peptide occupies residues 1–25; that stretch reads MGGGRWAAAGALLALAAGLLAAGSA. The FZ domain occupies 47–163; it reads TKPPQCVDIP…FPEGDVCIAM (117 aa). 5 cysteine pairs are disulfide-bonded: cysteine 52–cysteine 115, cysteine 62–cysteine 108, cysteine 99–cysteine 134, cysteine 123–cysteine 160, and cysteine 127–cysteine 151. N-linked (GlcNAc...) asparagine glycosylation occurs at asparagine 167. 3 disulfides stabilise this stretch: cysteine 180–cysteine 250, cysteine 183–cysteine 252, and cysteine 197–cysteine 300. Residues 180–300 enclose the NTR domain; it reads CPPCDNELKS…FMKKMKNHEC (121 aa).

It belongs to the secreted frizzled-related protein (sFRP) family. As to quaternary structure, interacts with WNT1, WNT2, WNT4, WNT8, MYOC and FRZD6. As to expression, highest levels in aortic endothelium, heart, spleen and eye. Lower levels in lung, brain and kidney. Weak expression in liver, skeletal muscle and the medial layer of the aorta. In the cortical brain, localized to neurons and small blood vessels. In the retina, localized to the inner and outer nuclear layers with high expression in the neuronal cell bodies. In the heart, restricted to myocytes. In lung, highest expression found in the epithelium of terminal bronchioles. In kidney, localized to the epithelium of collecting ducts of the medulla and, in spleen, expression restricted to the red pulp in cells associated with the sinuses.

Its subcellular location is the secreted. Its function is as follows. Soluble frizzled-related proteins (sFRPS) function as modulators of Wnt signaling through direct interaction with Wnts. They have a role in regulating cell growth and differentiation in specific cell types. SFRP1 decreases intracellular beta-catenin levels. Has antiproliferative effects on vascular cells, in vitro and in vivo, and can induce, in vivo, an angiogenic response. In vascular cell cycle, delays the G1 phase and entry into the S phase. In kidney development, inhibits tubule formation and bud growth in metanephroi. Inhibits WNT1/WNT4-mediated TCF-dependent transcription. The protein is Secreted frizzled-related protein 1 (SFRP1) of Bos taurus (Bovine).